A 568-amino-acid polypeptide reads, in one-letter code: SLAIN motif-containing protein 1 (568 aa).

Disordered regions lie at residues 1 to 22 (MMAE…SGPV), 59 to 92 (LLLL…TAAA), 139 to 162 (GGGP…SPPP), 235 to 256 (YTSR…STSE), and 291 to 403 (STSA…LRRS). Residues 21 to 56 (PVVNAELEVKKLQELVRKLEKQNEQLRSRAASAAAA) are a coiled coil. The segment covering 62-74 (LPPPPPAAPPPAG) has biased composition (pro residues). Residues 75–92 (LQPLGPRSPPAATATAAA) show a composition bias toward low complexity. Positions 139–149 (GGGPEPGGAGT) are enriched in gly residues. A compositionally biased stretch (polar residues) spans 235–245 (YTSRGSPLSPQ). The residue at position 243 (serine 243) is a Phosphoserine. Low complexity-rich tracts occupy residues 246 to 255 (SSIDSELSTS) and 291 to 307 (STSA…SLSS). Residues 316–329 (QEYDQYSLEDEEEF) show a composition bias toward acidic residues. A compositionally biased stretch (low complexity) spans 366–384 (SSQYFPSNNYQQQQYYSPQ). Over residues 385–395 (AQTPDQQPNRT) the composition is skewed to polar residues. Asymmetric dimethylarginine occurs at positions 471 and 543.

The protein belongs to the SLAIN motif-containing family. As to quaternary structure, interacts with MAPRE1, MAPRE2, MAPRE3 and CKAP5. Interacts with ZDHHC17 (via ANK repeats). Expressed in embryonic stem cells. Expressed in brain.

It localises to the cytoplasm. Its subcellular location is the cytoskeleton. Microtubule plus-end tracking protein that might be involved in the regulation of cytoplasmic microtubule dynamics, microtubule organization and microtubule elongation. In Homo sapiens (Human), this protein is SLAIN motif-containing protein 1 (SLAIN1).